The chain runs to 641 residues: 1-deoxy-D-xylulose-5-phosphate synthase (641 aa).

Thiamine diphosphate contacts are provided by residues H79 and 120 to 122; that span reads GHS. D151 provides a ligand contact to Mg(2+). Residues 152 to 153, N180, Y291, and E375 contribute to the thiamine diphosphate site; that span reads GS. A Mg(2+)-binding site is contributed by N180.

Belongs to the transketolase family. DXPS subfamily. In terms of assembly, homodimer. Mg(2+) serves as cofactor. It depends on thiamine diphosphate as a cofactor.

The enzyme catalyses D-glyceraldehyde 3-phosphate + pyruvate + H(+) = 1-deoxy-D-xylulose 5-phosphate + CO2. It functions in the pathway metabolic intermediate biosynthesis; 1-deoxy-D-xylulose 5-phosphate biosynthesis; 1-deoxy-D-xylulose 5-phosphate from D-glyceraldehyde 3-phosphate and pyruvate: step 1/1. Functionally, catalyzes the acyloin condensation reaction between C atoms 2 and 3 of pyruvate and glyceraldehyde 3-phosphate to yield 1-deoxy-D-xylulose-5-phosphate (DXP). This is 1-deoxy-D-xylulose-5-phosphate synthase from Nitratidesulfovibrio vulgaris (strain ATCC 29579 / DSM 644 / CCUG 34227 / NCIMB 8303 / VKM B-1760 / Hildenborough) (Desulfovibrio vulgaris).